Reading from the N-terminus, the 105-residue chain is Multidrug resistance protein EbrA (105 aa).

4 helical membrane passes run 2–22, 35–55, 60–80, and 87–104; these read IAGYIFLLIAILSEAAAAAML, VLVVIGYGLAFYMMSLTLQVI, SYATWSGAGTVLTAIIGVLWF, and RNIAGIICLVSGVVLINL.

This sequence belongs to the drug/metabolite transporter (DMT) superfamily. Small multidrug resistance (SMR) (TC 2.A.7.1) family. EbrA/EbrB subfamily. The efflux pump is composed of EbrA and EbrB.

The protein resides in the cell membrane. In terms of biological role, part of a multidrug efflux pump. Confers resistance to cationic lipophilic dyes such as ethidium bromide, acriflavine, pyronine Y and safranin O. The efflux is probably coupled to an influx of protons. The sequence is that of Multidrug resistance protein EbrA (ebrA) from Bacillus licheniformis (strain ATCC 14580 / DSM 13 / JCM 2505 / CCUG 7422 / NBRC 12200 / NCIMB 9375 / NCTC 10341 / NRRL NRS-1264 / Gibson 46).